The sequence spans 326 residues: MAALHHQAAAAPVTTTTDGGELRAMDLYEKLEKVGEGTYGKVYKAREKATGRIVALKKTRLPEDDEGVPPTALREVSLLRMLSQDSHVVRLLDLKQGQNKEGQTILYLVFEYMDTDLKKFIRAHRQNLQKIPVPTVKILMYQLCKGVAFCHGRGVLHRDLKPHNLLMDRKTMALKIADLGLSRSFTVPLKKYTHEILTLWYRAPEVLLGAAHYSTPVDIWSVGCIFAELATNQPLFAGDSEVQQLLHIFKLLGTPNEQVWPGVSKLPNWHEYPQWNPSKVSDLVHGLDADALDLLEKMLQYEPSKRISAKKAMEHPYFNDVNKELY.

One can recognise a Protein kinase domain in the interval 28-318 (YEKLEKVGEG…AKKAMEHPYF (291 aa)). Residues 34 to 42 (VGEGTYGKV) and lysine 57 each bind ATP. Phosphothreonine is present on threonine 38. Position 39 is a phosphotyrosine (tyrosine 39). Aspartate 159 acts as the Proton acceptor in catalysis. Position 193 is a phosphothreonine (threonine 193).

The protein belongs to the protein kinase superfamily. CMGC Ser/Thr protein kinase family. CDC2/CDKX subfamily. In terms of assembly, interacts with CYCB2-1 and CYCB2-2. Binding to CYCB2-1 or CYCB2-2 activates CDK kinase. In terms of tissue distribution, expressed in the dividing region of the root apex and the intercalary meristem of internodes.

It localises to the nucleus. Its subcellular location is the cytoplasm. The protein localises to the cytoskeleton. It is found in the spindle. The protein resides in the phragmoplast. It carries out the reaction L-seryl-[protein] + ATP = O-phospho-L-seryl-[protein] + ADP + H(+). The catalysed reaction is L-threonyl-[protein] + ATP = O-phospho-L-threonyl-[protein] + ADP + H(+). The enzyme catalyses [DNA-directed RNA polymerase] + ATP = phospho-[DNA-directed RNA polymerase] + ADP + H(+). Its function is as follows. Forms a complex with CYCB2-1 or CYCB2-2 that activates CDK kinase in tobacco BY2 cells during G2/M (mitosis) phases. May be involved in the regulation of the cell cycle at the G2/M transition. The chain is Cyclin-dependent kinase B2-1 (CDKB2-1) from Oryza sativa subsp. japonica (Rice).